Consider the following 535-residue polypeptide: Cytochrome P450 monooxygenase claQ (535 aa).

The next 2 membrane-spanning stretches (helical) occupy residues 7 to 27 (IGTWDVLFFLVFLWLLSKLVG) and 225 to 245 (YFAIVVFLLAQIFPILLNLPT). Cys-472 is a heme binding site.

Belongs to the cytochrome P450 family. Heme serves as cofactor.

Its subcellular location is the membrane. It functions in the pathway secondary metabolite biosynthesis; terpenoid biosynthesis. Cytochrome P450 monooxygenase; part of the gene cluster that mediates the biosynthesis of clavilactone A, a meroterpenoid that features a unique benzo-fused ten-membered carbocyclic ring unit with an alpha,beta-epoxy-gamma-lactone moiety, forming an intriguing 10/5/3 tricyclic nested skeleton. Cytochrome P450 monooxygenases claO, claP, claQ, claU, and claW are close orthologs, suggesting that a redundant function or pseudogenes are present in the cla cluster. These monoxygenases are not involved in clavilactone A biosynthesis nor its modification. ClaR, ClaS and ClaT are sufficient to produce clavilactone A. The biosynthesis begins with the prenyltransferase claS that transfers geranyl pyrophosphate (GPP) to hydroquinone to produces geranylhydroquinone. The cytochrome P450 monooxygenase claR then catalyzes the diradical coupling reaction between the intramolecular hydroquinone and allyl moieties to form the benzo-fused ten-membered carbocyclic ring unit of wigantol. Finally the cytochrome P450 monooxygenase claT exquisitely and stereoselectively assembles the alpha,beta-epoxy-gamma-lactone moiety, producing clavilactone A via arnebinol A. The protein is Cytochrome P450 monooxygenase claQ of Ampulloclitocybe clavipes (Club foot).